A 273-amino-acid polypeptide reads, in one-letter code: Formamidopyrimidine-DNA glycosylase (273 aa).

Pro2 (schiff-base intermediate with DNA) is an active-site residue. Glu3 (proton donor) is an active-site residue. Lys58 functions as the Proton donor; for beta-elimination activity in the catalytic mechanism. The DNA site is built by His91, Arg109, and Arg154. An FPG-type zinc finger spans residues 239–273; it reads FVYARTGEPCRICNAPVRQIVQGQRSTFYCPNCQK. Arg263 serves as the catalytic Proton donor; for delta-elimination activity.

Belongs to the FPG family. As to quaternary structure, monomer. Requires Zn(2+) as cofactor.

It carries out the reaction Hydrolysis of DNA containing ring-opened 7-methylguanine residues, releasing 2,6-diamino-4-hydroxy-5-(N-methyl)formamidopyrimidine.. The catalysed reaction is 2'-deoxyribonucleotide-(2'-deoxyribose 5'-phosphate)-2'-deoxyribonucleotide-DNA = a 3'-end 2'-deoxyribonucleotide-(2,3-dehydro-2,3-deoxyribose 5'-phosphate)-DNA + a 5'-end 5'-phospho-2'-deoxyribonucleoside-DNA + H(+). Functionally, involved in base excision repair of DNA damaged by oxidation or by mutagenic agents. Acts as a DNA glycosylase that recognizes and removes damaged bases. Has a preference for oxidized purines, such as 7,8-dihydro-8-oxoguanine (8-oxoG). Has AP (apurinic/apyrimidinic) lyase activity and introduces nicks in the DNA strand. Cleaves the DNA backbone by beta-delta elimination to generate a single-strand break at the site of the removed base with both 3'- and 5'-phosphates. This chain is Formamidopyrimidine-DNA glycosylase, found in Herminiimonas arsenicoxydans.